The primary structure comprises 154 residues: SsrA-binding protein (154 aa).

It belongs to the SmpB family.

Its subcellular location is the cytoplasm. Functionally, required for rescue of stalled ribosomes mediated by trans-translation. Binds to transfer-messenger RNA (tmRNA), required for stable association of tmRNA with ribosomes. tmRNA and SmpB together mimic tRNA shape, replacing the anticodon stem-loop with SmpB. tmRNA is encoded by the ssrA gene; the 2 termini fold to resemble tRNA(Ala) and it encodes a 'tag peptide', a short internal open reading frame. During trans-translation Ala-aminoacylated tmRNA acts like a tRNA, entering the A-site of stalled ribosomes, displacing the stalled mRNA. The ribosome then switches to translate the ORF on the tmRNA; the nascent peptide is terminated with the 'tag peptide' encoded by the tmRNA and targeted for degradation. The ribosome is freed to recommence translation, which seems to be the essential function of trans-translation. The sequence is that of SsrA-binding protein from Gluconacetobacter diazotrophicus (strain ATCC 49037 / DSM 5601 / CCUG 37298 / CIP 103539 / LMG 7603 / PAl5).